Reading from the N-terminus, the 238-residue chain is Ribonuclease PH (238 aa).

Residues arginine 86 and 124 to 126 (GTR) contribute to the phosphate site.

The protein belongs to the RNase PH family. As to quaternary structure, homohexameric ring arranged as a trimer of dimers.

The catalysed reaction is tRNA(n+1) + phosphate = tRNA(n) + a ribonucleoside 5'-diphosphate. In terms of biological role, phosphorolytic 3'-5' exoribonuclease that plays an important role in tRNA 3'-end maturation. Removes nucleotide residues following the 3'-CCA terminus of tRNAs; can also add nucleotides to the ends of RNA molecules by using nucleoside diphosphates as substrates, but this may not be physiologically important. Probably plays a role in initiation of 16S rRNA degradation (leading to ribosome degradation) during starvation. In Actinobacillus pleuropneumoniae serotype 7 (strain AP76), this protein is Ribonuclease PH.